The sequence spans 346 residues: tRNA N6-adenosine threonylcarbamoyltransferase (346 aa).

Positions 111 and 115 each coordinate Fe cation. Substrate contacts are provided by residues 134-138, D167, G180, and N277; that span reads LVSGG. D305 serves as a coordination point for Fe cation.

Belongs to the KAE1 / TsaD family. Fe(2+) serves as cofactor.

It localises to the cytoplasm. It catalyses the reaction L-threonylcarbamoyladenylate + adenosine(37) in tRNA = N(6)-L-threonylcarbamoyladenosine(37) in tRNA + AMP + H(+). In terms of biological role, required for the formation of a threonylcarbamoyl group on adenosine at position 37 (t(6)A37) in tRNAs that read codons beginning with adenine. Is involved in the transfer of the threonylcarbamoyl moiety of threonylcarbamoyl-AMP (TC-AMP) to the N6 group of A37, together with TsaE and TsaB. TsaD likely plays a direct catalytic role in this reaction. The sequence is that of tRNA N6-adenosine threonylcarbamoyltransferase from Bordetella parapertussis (strain 12822 / ATCC BAA-587 / NCTC 13253).